We begin with the raw amino-acid sequence, 185 residues long: Ribosome-recycling factor (185 aa).

This sequence belongs to the RRF family.

The protein resides in the cytoplasm. In terms of biological role, responsible for the release of ribosomes from messenger RNA at the termination of protein biosynthesis. May increase the efficiency of translation by recycling ribosomes from one round of translation to another. This chain is Ribosome-recycling factor, found in Shewanella oneidensis (strain ATCC 700550 / JCM 31522 / CIP 106686 / LMG 19005 / NCIMB 14063 / MR-1).